Reading from the N-terminus, the 773-residue chain is Molybdenum cofactor sulfurase (773 aa).

Position 243 is an N6-(pyridoxal phosphate)lysine (K243). Residue C410 is part of the active site. In terms of domain architecture, MOSC spans 632-773; it reads LRLLRQSGQR…LSCGDTVLVE (142 aa). S731 bears the Phosphoserine mark.

The protein belongs to the class-V pyridoxal-phosphate-dependent aminotransferase family. MOCOS subfamily. Pyridoxal 5'-phosphate serves as cofactor.

The catalysed reaction is Mo-molybdopterin + L-cysteine + AH2 = thio-Mo-molybdopterin + L-alanine + A + H2O. It participates in cofactor biosynthesis; molybdopterin biosynthesis. Its function is as follows. Sulfurates the molybdenum cofactor. Sulfation of molybdenum is essential for xanthine dehydrogenase (XDH) and aldehyde oxidase (ADO) enzymes in which molybdenum cofactor is liganded by 1 oxygen and 1 sulfur atom in active form. This is Molybdenum cofactor sulfurase from Drosophila ananassae (Fruit fly).